The primary structure comprises 386 residues: 17-hydroxy-3-oxo-4-pregnene-20-carboxyl-CoA lyase (386 aa).

The Proton acceptor role is filled by tyrosine 292. Tyrosine 342 (proton donor) is an active-site residue.

Belongs to the thiolase-like superfamily. As to quaternary structure, homodimer. Interacts with the ChsH1/ChsH2 hydratase via the DUF35 C-terminal region of ChsH2 (ChsH2-DUF35). The ChsH1-ChsH2-Ltp2 protein complex is composed of two protomers that form a heterohexameric structure through the Ltp2 dimerization interface.

It carries out the reaction 17-hydroxy-3-oxochol-4-en-22-oyl-CoA = androst-4-ene-3,17-dione + propanoyl-CoA. It participates in steroid metabolism; cholesterol degradation. Functionally, involved in cholesterol side chain degradation. When associated with the ChsH1/ChsH2 hydratase, catalyzes the retroaldol cleavage of 17-hydroxy-3-oxo-4-pregnene-20-carboxyl-CoA (17-HOPC-CoA) produced by the hydratase, forming androst-4-ene-3,17-dione and propionyl-CoA. The protein is 17-hydroxy-3-oxo-4-pregnene-20-carboxyl-CoA lyase of Mycobacterium tuberculosis (strain ATCC 25618 / H37Rv).